A 119-amino-acid polypeptide reads, in one-letter code: Endocuticle structural glycoprotein SgAbd-3 (119 aa).

At Gln1 the chain carries Pyrrolidone carboxylic acid. The 75-residue stretch at 24-98 folds into the Chitin-binding type R&amp;R domain; the sequence is DGSYRYSFET…PQGAHLPTPP (75 aa). Residues 33 to 55 form a disordered region; sequence TSDGQRASQEGALKQVSAPGPDG. A glycan (O-linked (HexNAc...) threonine) is linked at Thr96.

Its function is as follows. Component of the abdominal endocuticle. The sequence is that of Endocuticle structural glycoprotein SgAbd-3 from Schistocerca gregaria (Desert locust).